A 608-amino-acid polypeptide reads, in one-letter code: UvrABC system protein C (608 aa).

The GIY-YIG domain occupies 13 to 91 (HDAGVYRMYD…IKTYQPRYNV (79 aa)). In terms of domain architecture, UVR spans 201–236 (QQVLEHLIHKMEQASLALDFEEAARIRDQIQAVRAV).

Belongs to the UvrC family. As to quaternary structure, interacts with UvrB in an incision complex.

The protein resides in the cytoplasm. Its function is as follows. The UvrABC repair system catalyzes the recognition and processing of DNA lesions. UvrC both incises the 5' and 3' sides of the lesion. The N-terminal half is responsible for the 3' incision and the C-terminal half is responsible for the 5' incision. This Pasteurella multocida (strain Pm70) protein is UvrABC system protein C.